A 90-amino-acid chain; its full sequence is Probable Fe(2+)-trafficking protein (90 aa).

Belongs to the Fe(2+)-trafficking protein family.

Could be a mediator in iron transactions between iron acquisition and iron-requiring processes, such as synthesis and/or repair of Fe-S clusters in biosynthetic enzymes. The protein is Probable Fe(2+)-trafficking protein of Haemophilus influenzae (strain 86-028NP).